The sequence spans 295 residues: MTNVTGTERVKRGMAEMQKGGVIMDVINAEQAKIAEEAGAVAVMALERVPADIRAAGGVSRMADPTIVEEVMGAVSIPVMAKCRIGHLVEARVLESLGVDYIDESEVLTPADEVYHLNKRDYTVPFVCGCRDIGEAARRIAEGASMLRTKGEPGTGNIVEAVRHMRQVNAEIRQVASLREDELMTYAKNTGAPYEVLLEIKRLGRLPVVNFAAGGVATPADAALMMQLGADGVFVGSGIFKSENPERFARAIVEATTHYEDYELIASLSKGLGNAMKGIEISTLLPEQRMQERGW.

Position 25 (Asp-25) interacts with D-ribose 5-phosphate. Residue Lys-82 is the Schiff-base intermediate with D-ribose 5-phosphate of the active site. Gly-154 serves as a coordination point for D-ribose 5-phosphate. Position 166 (Arg-166) interacts with D-glyceraldehyde 3-phosphate. Residues Gly-215 and 236-237 contribute to the D-ribose 5-phosphate site; that span reads GS.

It belongs to the PdxS/SNZ family. In the presence of PdxT, forms a dodecamer of heterodimers.

The enzyme catalyses aldehydo-D-ribose 5-phosphate + D-glyceraldehyde 3-phosphate + L-glutamine = pyridoxal 5'-phosphate + L-glutamate + phosphate + 3 H2O + H(+). The protein operates within cofactor biosynthesis; pyridoxal 5'-phosphate biosynthesis. Functionally, catalyzes the formation of pyridoxal 5'-phosphate from ribose 5-phosphate (RBP), glyceraldehyde 3-phosphate (G3P) and ammonia. The ammonia is provided by the PdxT subunit. Can also use ribulose 5-phosphate and dihydroxyacetone phosphate as substrates, resulting from enzyme-catalyzed isomerization of RBP and G3P, respectively. The protein is Pyridoxal 5'-phosphate synthase subunit PdxS of Bacillus cereus (strain G9842).